The primary structure comprises 348 residues: Arginine kinase Oct f 2 (348 aa).

One can recognise a Phosphagen kinase N-terminal domain in the interval 1 to 83 (MAEELFKTLQ…LDAVIMDYHK (83 aa)). 56-60 (GVGIY) is a substrate binding site. Positions 111 to 347 (MIVSTRVRVG…NEIIREETNS (237 aa)) constitute a Phosphagen kinase C-terminal domain. Residues 114–118 (STRVR) and His-177 contribute to the ATP site. Glu-217 contacts substrate. Residue Arg-221 participates in ATP binding. Position 263 (Cys-263) interacts with substrate. ATP-binding positions include 272–276 (RASVH) and 300–305 (RGIHGE). Glu-305 is a binding site for substrate.

Belongs to the ATP:guanido phosphotransferase family. As to expression, muscle (at protein level).

The catalysed reaction is L-arginine + ATP = N(omega)-phospho-L-arginine + ADP + H(+). In terms of biological role, catalyzes the reversible transfer of high energy ATP gamma-phosphate group to L-arginine. The chain is Arginine kinase Oct f 2 from Amphioctopus fangsiao (Ocellated octopus).